The primary structure comprises 894 residues: MTDVTVKALAAEIQTSVDRLVQQFADAGIPKSADDSVSAQEKQTLLAHLNRENGSGPDKLTLQRKTRSTLNIPGTGGKSKSVQIEVRKKRTFVKRDPQETERLAAEEQAQREAEEQARREAEETAKREAQQKADREAAEQAKRDAAEKAKREAAEKDKVSNQQTDDMTKTAQAEKARRENEAAELKRKAEEEARRKLEEEARRVAEEARRMAEENKWTDNAEPTEDTSDYHVTTSQHARQAEDENDREVEGGRGRSRNAKAARPAKKGNKHSESKADREEARAAVRGGKGGKNRKGSALQQSFQKPVQAVNRDVVIGETITVGELANKMAVKGSQVIKAMMKLGAMATINQVIDQETAQLVAEEMGHKVILRRENELEEAVMSDRDTGAAAEPRAPVVTIMGHVDHGKTSLLDYIRSTKVASGEAGGITQHIGAYHVETDNGMITFLDTPGHAAFTSMRARGAQATDIVVLVVAADDGVMPQTIEAIQHAKAAGVPVVVAVNKIDKPEADPDRVKNELSQYGILPEEWGGESQFVHVSAKAGTGIDELLDAILLQAEVLELKAVRKGMASGAVIESFLDKGRGPVATVLVREGTLNKGDIVLCGFEYGRVRAMRNELGQEVLEAGPSIPVEILGLSGVPAAGDEVTVVRDEKKAREVALYRQGKFREVKLARQQKSKLENMFANMTEGEVHEVNIVLKADVQGSVEAISDSLLKLSTDEVKVKIIGSGVGGITETDATLAAASNAILVGFNVRADASARKVIEAESLDLRYYSVIYNLIDEVKAAMSGMLSPELKQQIIGLAEVRDVFKSPKFGAVAGCMVTEGTIKRHNPIRVLRDNVVIYEGELESLRRFKDDVNEVRNGMECGIGVKNYNDVRVGDMIEVFEIIEIQRTIA.

The tract at residues 47–305 (AHLNRENGSG…GSALQQSFQK (259 aa)) is disordered. Polar residues predominate over residues 68 to 82 (STLNIPGTGGKSKSV). Composition is skewed to basic and acidic residues over residues 93-159 (VKRD…KDKV) and 166-219 (DMTK…KWTD). The segment covering 254–269 (GRSRNAKAARPAKKGN) has biased composition (basic residues). Residues 270–283 (KHSESKADREEARA) show a composition bias toward basic and acidic residues. The 170-residue stretch at 393–562 (PRAPVVTIMG…LLQAEVLELK (170 aa)) folds into the tr-type G domain. Positions 402–409 (GHVDHGKT) are G1. Position 402-409 (402-409 (GHVDHGKT)) interacts with GTP. A G2 region spans residues 427 to 431 (GITQH). The segment at 448–451 (DTPG) is G3. Residues 448 to 452 (DTPGH) and 502 to 505 (NKID) each bind GTP. The tract at residues 502 to 505 (NKID) is G4. The G5 stretch occupies residues 538–540 (SAK).

Belongs to the TRAFAC class translation factor GTPase superfamily. Classic translation factor GTPase family. IF-2 subfamily.

The protein localises to the cytoplasm. In terms of biological role, one of the essential components for the initiation of protein synthesis. Protects formylmethionyl-tRNA from spontaneous hydrolysis and promotes its binding to the 30S ribosomal subunits. Also involved in the hydrolysis of GTP during the formation of the 70S ribosomal complex. The polypeptide is Translation initiation factor IF-2 (Citrobacter koseri (strain ATCC BAA-895 / CDC 4225-83 / SGSC4696)).